Reading from the N-terminus, the 517-residue chain is Splicing factor cactin (517 aa).

The span at 1–14 (MAFRDSTRDFNRSR) shows a compositional bias: basic and acidic residues. The interval 1 to 59 (MAFRDSTRDFNRSRPEKRHASRSSSPRSFRPSNQNARANYNLPRVRDAMKEEERSRETK) is disordered. Over residues 22-32 (RSSSPRSFRPS) the composition is skewed to low complexity. A compositionally biased stretch (basic and acidic residues) spans 44-59 (RVRDAMKEEERSRETK).

Belongs to the CACTIN family. Interacts with sde2. Interacts with cdc5.

Functionally, plays a role in pre-mRNA splicing by facilitating excision of introns featuring long spacing between the branchpoint and 3'-splice site (ss). Recruited to the spliceosome by sde2, which may enable folding of the RNA between the BP and 3'-ss to guide the splice site towards the spliceosome's catalytic center. Assists the splicing of several components involved in chromatin organization. The sequence is that of Splicing factor cactin from Schizosaccharomyces pombe (strain 972 / ATCC 24843) (Fission yeast).